A 351-amino-acid chain; its full sequence is Holliday junction branch migration complex subunit RuvB (351 aa).

The segment at M1–Y186 is large ATPase domain (RuvB-L). ATP-binding positions include I25, R26, G67, K70, T71, T72, E133–F135, R176, Y186, and R223. A Mg(2+)-binding site is contributed by T71. Positions R187 to N257 are small ATPAse domain (RuvB-S). Positions I260 to E351 are head domain (RuvB-H). R296, R315, and R320 together coordinate DNA.

It belongs to the RuvB family. Homohexamer. Forms an RuvA(8)-RuvB(12)-Holliday junction (HJ) complex. HJ DNA is sandwiched between 2 RuvA tetramers; dsDNA enters through RuvA and exits via RuvB. An RuvB hexamer assembles on each DNA strand where it exits the tetramer. Each RuvB hexamer is contacted by two RuvA subunits (via domain III) on 2 adjacent RuvB subunits; this complex drives branch migration. In the full resolvosome a probable DNA-RuvA(4)-RuvB(12)-RuvC(2) complex forms which resolves the HJ.

The protein localises to the cytoplasm. The catalysed reaction is ATP + H2O = ADP + phosphate + H(+). Its function is as follows. The RuvA-RuvB-RuvC complex processes Holliday junction (HJ) DNA during genetic recombination and DNA repair, while the RuvA-RuvB complex plays an important role in the rescue of blocked DNA replication forks via replication fork reversal (RFR). RuvA specifically binds to HJ cruciform DNA, conferring on it an open structure. The RuvB hexamer acts as an ATP-dependent pump, pulling dsDNA into and through the RuvAB complex. RuvB forms 2 homohexamers on either side of HJ DNA bound by 1 or 2 RuvA tetramers; 4 subunits per hexamer contact DNA at a time. Coordinated motions by a converter formed by DNA-disengaged RuvB subunits stimulates ATP hydrolysis and nucleotide exchange. Immobilization of the converter enables RuvB to convert the ATP-contained energy into a lever motion, pulling 2 nucleotides of DNA out of the RuvA tetramer per ATP hydrolyzed, thus driving DNA branch migration. The RuvB motors rotate together with the DNA substrate, which together with the progressing nucleotide cycle form the mechanistic basis for DNA recombination by continuous HJ branch migration. Branch migration allows RuvC to scan DNA until it finds its consensus sequence, where it cleaves and resolves cruciform DNA. This Coxiella burnetii (strain RSA 331 / Henzerling II) protein is Holliday junction branch migration complex subunit RuvB.